The primary structure comprises 244 residues: Small ribosomal subunit protein uS2 (244 aa).

Belongs to the universal ribosomal protein uS2 family.

This chain is Small ribosomal subunit protein uS2, found in Hydrogenovibrio crunogenus (strain DSM 25203 / XCL-2) (Thiomicrospira crunogena).